Reading from the N-terminus, the 145-residue chain is Probable low molecular weight protein-tyrosine-phosphatase EpsP (145 aa).

Cysteine 9 (nucleophile) is an active-site residue. Residue arginine 15 is part of the active site. Aspartate 114 functions as the Proton donor in the catalytic mechanism.

It belongs to the low molecular weight phosphotyrosine protein phosphatase family.

It carries out the reaction O-phospho-L-tyrosyl-[protein] + H2O = L-tyrosyl-[protein] + phosphate. It participates in glycan metabolism; exopolysaccharide biosynthesis. In terms of biological role, may be involved in assembly or function of the EPS I polymerization/export complex and/or the EpsB ATPase. Alternatively it may function in the removal of the terminal phosphate from C55-isoprenyl pyrophosphate in order to recycle the C55-isoprenyl phosphate lipid carrier used in the synthesis of polysaccharide repeat units. The polypeptide is Probable low molecular weight protein-tyrosine-phosphatase EpsP (epsP) (Ralstonia solanacearum (Pseudomonas solanacearum)).